Reading from the N-terminus, the 402-residue chain is LIM/homeobox protein Lhx5 (402 aa).

LIM zinc-binding domains lie at 3 to 61 and 62 to 125; these read VHCA…RRFG and TKCA…SSSL. Positions 124–148 are enriched in low complexity; the sequence is SLKEGSLNSVSSCTDRSLSPDLQDP. 2 disordered regions span residues 124 to 186 and 298 to 402; these read SLKE…PRTT and HGPP…AAVW. Positions 151–167 are enriched in basic and acidic residues; it reads DDPKETDNSTSSDKETA. Positions 180–239 form a DNA-binding region, homeobox; sequence RRGPRTTIKAKQLETLKAAFAATPKPTRHIREQLAQETGLNMRVIQVWFQNRRSKERRMK. Low complexity-rich tracts occupy residues 300-311 and 322-336; these read PPSQAQSPADSS and PLGA…PHGA.

It localises to the nucleus. Plays an essential role in the regulation of neuronal differentiation and migration during development of the central nervous system. The protein is LIM/homeobox protein Lhx5 (Lhx5) of Mus musculus (Mouse).